Reading from the N-terminus, the 421-residue chain is Glutamyl-tRNA reductase (421 aa).

Substrate is bound by residues 49-52 (TCNR), S109, 114-116 (EAQ), and Q120. Residue C50 is the Nucleophile of the active site. 189 to 194 (GAGEMC) contributes to the NADP(+) binding site.

The protein belongs to the glutamyl-tRNA reductase family. As to quaternary structure, homodimer.

The enzyme catalyses (S)-4-amino-5-oxopentanoate + tRNA(Glu) + NADP(+) = L-glutamyl-tRNA(Glu) + NADPH + H(+). Its pathway is porphyrin-containing compound metabolism; protoporphyrin-IX biosynthesis; 5-aminolevulinate from L-glutamyl-tRNA(Glu): step 1/2. In terms of biological role, catalyzes the NADPH-dependent reduction of glutamyl-tRNA(Glu) to glutamate 1-semialdehyde (GSA). In Magnetococcus marinus (strain ATCC BAA-1437 / JCM 17883 / MC-1), this protein is Glutamyl-tRNA reductase.